An 88-amino-acid polypeptide reads, in one-letter code: Small ribosomal subunit protein uS15 (88 aa).

Belongs to the universal ribosomal protein uS15 family. As to quaternary structure, part of the 30S ribosomal subunit. Forms a bridge to the 50S subunit in the 70S ribosome, contacting the 23S rRNA.

In terms of biological role, one of the primary rRNA binding proteins, it binds directly to 16S rRNA where it helps nucleate assembly of the platform of the 30S subunit by binding and bridging several RNA helices of the 16S rRNA. Its function is as follows. Forms an intersubunit bridge (bridge B4) with the 23S rRNA of the 50S subunit in the ribosome. The chain is Small ribosomal subunit protein uS15 from Verminephrobacter eiseniae (strain EF01-2).